Reading from the N-terminus, the 343-residue chain is Twinfilin (343 aa).

2 ADF-H domains span residues Gln4 to Ile139 and Gly177 to His312. Positions Asn317 to Glu343 are disordered.

This sequence belongs to the actin-binding proteins ADF family. Twinfilin subfamily. As to quaternary structure, interacts with G-actin; ADP-actin form.

It localises to the cytoplasm. The protein localises to the cytoskeleton. Its subcellular location is the cell cortex. Functionally, actin-binding protein involved in motile and morphological processes. Inhibits actin polymerization, likely by sequestering G-actin. In Aedes aegypti (Yellowfever mosquito), this protein is Twinfilin (twf).